The primary structure comprises 375 residues: 23S rRNA (uracil(747)-C(5))-methyltransferase RlmC (375 aa).

Residues cysteine 3, cysteine 11, cysteine 14, and cysteine 87 each contribute to the [4Fe-4S] cluster site. S-adenosyl-L-methionine contacts are provided by glutamine 212, phenylalanine 241, glutamate 262, and asparagine 307. Cysteine 334 functions as the Nucleophile in the catalytic mechanism.

This sequence belongs to the class I-like SAM-binding methyltransferase superfamily. RNA M5U methyltransferase family. RlmC subfamily.

It carries out the reaction uridine(747) in 23S rRNA + S-adenosyl-L-methionine = 5-methyluridine(747) in 23S rRNA + S-adenosyl-L-homocysteine + H(+). In terms of biological role, catalyzes the formation of 5-methyl-uridine at position 747 (m5U747) in 23S rRNA. This Escherichia coli O157:H7 protein is 23S rRNA (uracil(747)-C(5))-methyltransferase RlmC.